A 232-amino-acid polypeptide reads, in one-letter code: uncharacterized protein (232 aa).

The Autotransporter domain maps to 1–232; it reads MIIKKSGGRW…LYTMGVSARF (232 aa).

This is an uncharacterized protein from Escherichia coli (strain K12).